Here is a 997-residue protein sequence, read N- to C-terminus: Translation initiation factor IF-2 (997 aa).

A disordered region spans residues 101 to 409 (ELAAEQAAAR…QHQDRRHEQV (309 aa)). 3 stretches are compositionally biased toward low complexity: residues 116–185 (AEAV…QAEP), 195–208 (AAPAQAVAEPVEPA), and 244–280 (PSAPAESPKSAKAEPAAAPKTTAKPGEIRRAAAPAAP). Residues 281 to 292 (DRAREEARRAAE) are compositionally biased toward basic and acidic residues. Residues 385–394 (RAGGKGGRGG) show a composition bias toward gly residues. Basic and acidic residues predominate over residues 400–409 (QHQDRRHEQV). The tr-type G domain maps to 498 to 665 (PRAPVVTVMG…NVLLQAEILE (168 aa)). Residues 507–514 (GHVDHGKT) form a G1 region. GTP is bound at residue 507 to 514 (GHVDHGKT). Residues 532–536 (GITQH) are G2. The interval 553-556 (DTPG) is G3. GTP contacts are provided by residues 553–557 (DTPGH) and 607–610 (NKID). The tract at residues 607–610 (NKID) is G4. The G5 stretch occupies residues 643 to 645 (SAK).

The protein belongs to the TRAFAC class translation factor GTPase superfamily. Classic translation factor GTPase family. IF-2 subfamily.

The protein localises to the cytoplasm. Its function is as follows. One of the essential components for the initiation of protein synthesis. Protects formylmethionyl-tRNA from spontaneous hydrolysis and promotes its binding to the 30S ribosomal subunits. Also involved in the hydrolysis of GTP during the formation of the 70S ribosomal complex. The protein is Translation initiation factor IF-2 of Bordetella bronchiseptica (strain ATCC BAA-588 / NCTC 13252 / RB50) (Alcaligenes bronchisepticus).